Here is a 165-residue protein sequence, read N- to C-terminus: Phosphopantetheine adenylyltransferase (165 aa).

S10 provides a ligand contact to substrate. Residues 10–11 and H18 contribute to the ATP site; that span reads SF. Substrate contacts are provided by K42, L74, and R88. Residues 89–91, E99, and 124–130 each bind ATP; these read GLR and YSFLSSS.

The protein belongs to the bacterial CoaD family. Homohexamer. The cofactor is Mg(2+).

The protein resides in the cytoplasm. The catalysed reaction is (R)-4'-phosphopantetheine + ATP + H(+) = 3'-dephospho-CoA + diphosphate. The protein operates within cofactor biosynthesis; coenzyme A biosynthesis; CoA from (R)-pantothenate: step 4/5. Its function is as follows. Reversibly transfers an adenylyl group from ATP to 4'-phosphopantetheine, yielding dephospho-CoA (dPCoA) and pyrophosphate. This chain is Phosphopantetheine adenylyltransferase, found in Anoxybacillus flavithermus (strain DSM 21510 / WK1).